Consider the following 187-residue polypeptide: Peptidyl-tRNA hydrolase (187 aa).

Residue tyrosine 14 coordinates tRNA. The active-site Proton acceptor is the histidine 19. 2 residues coordinate tRNA: tyrosine 63 and asparagine 65.

Belongs to the PTH family. In terms of assembly, monomer.

It is found in the cytoplasm. The catalysed reaction is an N-acyl-L-alpha-aminoacyl-tRNA + H2O = an N-acyl-L-amino acid + a tRNA + H(+). In terms of biological role, hydrolyzes ribosome-free peptidyl-tRNAs (with 1 or more amino acids incorporated), which drop off the ribosome during protein synthesis, or as a result of ribosome stalling. Its function is as follows. Catalyzes the release of premature peptidyl moieties from peptidyl-tRNA molecules trapped in stalled 50S ribosomal subunits, and thus maintains levels of free tRNAs and 50S ribosomes. The protein is Peptidyl-tRNA hydrolase of Thermodesulfovibrio yellowstonii (strain ATCC 51303 / DSM 11347 / YP87).